Consider the following 212-residue polypeptide: Cyclin-dependent kinase inhibitor 3 (212 aa).

The span at 1–12 shows a compositional bias: polar residues; it reads MKPPSSIQTSEF. The interval 1-20 is disordered; sequence MKPPSSIQTSEFDSSDEEPI. The segment at 1–34 is interaction with CDK2; sequence MKPPSSIQTSEFDSSDEEPIEDEQTPIHISWLSL. The Tyrosine-protein phosphatase domain occupies 33 to 201; sequence SLSRVNCSQF…FRDKLAAHLS (169 aa). Catalysis depends on cysteine 140, which acts as the Phosphocysteine intermediate.

This sequence belongs to the protein-tyrosine phosphatase family. Interacts with cyclin-dependent kinases such as CDK1, CDK2 and CDK3. Does not interact with CDK4. Interacts (via C-terminus) with phosphorylated CDK2 (via C-terminal helix). Interacts with MS4A3 (via C-terminus); the interaction enhances CDKN3 enzymatic activity.

Its subcellular location is the cytoplasm. It is found in the perinuclear region. The enzyme catalyses O-phospho-L-tyrosyl-[protein] + H2O = L-tyrosyl-[protein] + phosphate. The catalysed reaction is O-phospho-L-threonyl-[protein] + H2O = L-threonyl-[protein] + phosphate. It carries out the reaction O-phospho-L-seryl-[protein] + H2O = L-seryl-[protein] + phosphate. Functionally, may play a role in cell cycle regulation. Dual specificity CC phosphatase active toward substrates containing either phosphotyrosine or phosphoserine residues. Dephosphorylates CDK2 at 'Thr-160' in a cyclin-dependent manner. The polypeptide is Cyclin-dependent kinase inhibitor 3 (Homo sapiens (Human)).